Reading from the N-terminus, the 198-residue chain is UPF0312 protein PFL_5802 (198 aa).

The first 23 residues, 1–23 (MLKKTLAALAIGSAVLAAGQVMA), serve as a signal peptide directing secretion.

Belongs to the UPF0312 family. Type 1 subfamily.

The protein localises to the periplasm. The sequence is that of UPF0312 protein PFL_5802 from Pseudomonas fluorescens (strain ATCC BAA-477 / NRRL B-23932 / Pf-5).